The primary structure comprises 160 residues: Transcription elongation factor GreA (160 aa).

Belongs to the GreA/GreB family.

Its function is as follows. Necessary for efficient RNA polymerase transcription elongation past template-encoded arresting sites. The arresting sites in DNA have the property of trapping a certain fraction of elongating RNA polymerases that pass through, resulting in locked ternary complexes. Cleavage of the nascent transcript by cleavage factors such as GreA or GreB allows the resumption of elongation from the new 3'terminus. GreA releases sequences of 2 to 3 nucleotides. The chain is Transcription elongation factor GreA from Francisella tularensis subsp. tularensis (strain FSC 198).